Consider the following 311-residue polypeptide: Ribosomal RNA small subunit methyltransferase H (311 aa).

Residues 39-41 (GGH), Asp59, Phe81, Asp102, and His109 contribute to the S-adenosyl-L-methionine site.

The protein belongs to the methyltransferase superfamily. RsmH family.

The protein resides in the cytoplasm. It catalyses the reaction cytidine(1402) in 16S rRNA + S-adenosyl-L-methionine = N(4)-methylcytidine(1402) in 16S rRNA + S-adenosyl-L-homocysteine + H(+). Its function is as follows. Specifically methylates the N4 position of cytidine in position 1402 (C1402) of 16S rRNA. This is Ribosomal RNA small subunit methyltransferase H from Porphyromonas gingivalis (strain ATCC BAA-308 / W83).